A 191-amino-acid chain; its full sequence is dCTP deaminase, dUMP-forming (191 aa).

DCTP-binding positions include 101–106, aspartate 119, 127–129, glutamine 148, tyrosine 162, and glutamine 174; these read KSSLGR and TLE. The active-site Proton donor/acceptor is the glutamate 129.

It belongs to the dCTP deaminase family. In terms of assembly, homotrimer.

It carries out the reaction dCTP + 2 H2O = dUMP + NH4(+) + diphosphate. The protein operates within pyrimidine metabolism; dUMP biosynthesis; dUMP from dCTP: step 1/1. Its function is as follows. Bifunctional enzyme that catalyzes both the deamination of dCTP to dUTP and the hydrolysis of dUTP to dUMP without releasing the toxic dUTP intermediate. The chain is dCTP deaminase, dUMP-forming from Streptomyces avermitilis (strain ATCC 31267 / DSM 46492 / JCM 5070 / NBRC 14893 / NCIMB 12804 / NRRL 8165 / MA-4680).